The chain runs to 253 residues: 28 kDa inner dynein arm light chain, axonemal (253 aa).

A disordered region spans residues 19-44 (TSKDKGKGAKGTPGKKGALPPVEQKP). Residues 160–239 (IRKALQTEQG…LKQQLETFLV (80 aa)) are a coiled coil.

This sequence belongs to the inner dynein arm light chain family.

It is found in the cytoplasm. It localises to the cytoskeleton. Its subcellular location is the flagellum axoneme. Functionally, plays a dynamic role in flagellar motility. May be necessary for stable assembly of a subset of inner dynein arms or for the binding of these arms to the outer doublet microtubules of the axoneme. This Chlamydomonas reinhardtii (Chlamydomonas smithii) protein is 28 kDa inner dynein arm light chain, axonemal (IDA4).